The primary structure comprises 351 residues: 3-ketosteroid-9-alpha-monooxygenase, ferredoxin reductase component (351 aa).

The FAD-binding FR-type domain occupies 10 to 116 (SRSVILTVSA…LPPAGVFTPK (107 aa)). The 88-residue stretch at 264–351 (ATVEVELDGE…PVTDHLKIEF (88 aa)) folds into the 2Fe-2S ferredoxin-type domain. Residues C300, C305, C308, and C338 each coordinate [2Fe-2S] cluster.

As to quaternary structure, the two-component system 3-ketosteroid-9-alpha-monooxygenase is composed of an oxygenase component KshA and a reductase component KshB. Requires FAD as cofactor. [2Fe-2S] cluster is required as a cofactor.

It catalyses the reaction androsta-1,4-diene-3,17-dione + 2 reduced [2Fe-2S]-[ferredoxin] + O2 + 2 H(+) = 9alpha-hydroxyandrosta-1,4-diene-3,17-dione + 2 oxidized [2Fe-2S]-[ferredoxin] + H2O. The protein operates within steroid metabolism; cholesterol degradation. KSH activity is completely inhibited by zinc ions. KshB is specifically inhibited by Cu(2+) ions. In terms of biological role, probably involved in the degradation of cholesterol. In vitro, catalyzes the introduction of a 9alpha-hydroxyl moiety into the ring B of 3-ketosteroid substrates such as 1,4-androstadiene-3,17-dione (ADD), 4-androstene-3,17-dione (AD), 4-androstene-17beta-ol-3-one (testosterone), 4-pregnene-3,20-dione (progesterone), 19-nor-4-androstene-3,17-dione (nordion), 1-(5alpha)-androstene-3,17-dione, 5alpha-androstane-3,17-dione and 5beta-androstane-3,17-dione. KSH has the highest activity with 3-keto-Delta4 steroid substrates. The sequence is that of 3-ketosteroid-9-alpha-monooxygenase, ferredoxin reductase component from Rhodococcus rhodochrous.